Here is a 245-residue protein sequence, read N- to C-terminus: Fibroblast growth factor 13 (245 aa).

The interval 1–36 (MAAAIASSLIRQKRQAREREKSNACKCVSSPSKGKT) is disordered. The mediates targeting to the nucleus stretch occupies residues 1–62 (MAAAIASSLI…GSKKRRRRRP (62 aa)). The segment at 67 to 201 (KGIVTKLYSR…AHFLPKPLKV (135 aa)) is mediates interaction with sodium channels. Residues 157 to 164 (SMIYRQQQ) form a tubulin-binding domain necessary and sufficient for tubulin-binding region. Serine 208 carries the phosphoserine modification. The tract at residues 213-245 (TEFSRSGSGTPTKSRSVSGVLNGGKSMSHNEST) is disordered. Over residues 215–245 (FSRSGSGTPTKSRSVSGVLNGGKSMSHNEST) the composition is skewed to polar residues.

This sequence belongs to the heparin-binding growth factors family. Interacts with SCN8A; regulates SCN8A activity. Interacts with SCN1A; may regulate SCN1A activity. Interacts with SCN5A; the interaction is direct and may regulate SNC5A density at membranes and function. May also interact with SCN2A and SCN11A. Interacts with MAPK8IP2; may regulate the MAPK8IP2 scaffolding activity. Post-translationally, may be phosphorylated. Detected in brain, eye and heart. In brain, the different isoforms display different patterns of expression. Expressed in brain and heart (at protein level). Isoform 3 is highly expressed in cardiac myocytes while isoform 1 is the most abundant in brain.

Its subcellular location is the cell projection. It localises to the filopodium. The protein resides in the growth cone. It is found in the dendrite. The protein localises to the cell membrane. Its subcellular location is the sarcolemma. It localises to the cytoplasm. The protein resides in the nucleus. Functionally, microtubule-binding protein which directly binds tubulin and is involved in both polymerization and stabilization of microtubules. Through its action on microtubules, may participate to the refinement of axons by negatively regulating axonal and leading processes branching. Plays a crucial role in neuron polarization and migration in the cerebral cortex and the hippocampus. Regulates voltage-gated sodium channel transport and function. May also play a role in MAPK signaling. Required for the development of axonal initial segment-targeting inhibitory GABAergic synapses made by chandelier neurons. In terms of biological role, seems not to be involved in neuroblast polarization and migration but regulates axon branching. The sequence is that of Fibroblast growth factor 13 from Mus musculus (Mouse).